The following is a 191-amino-acid chain: dCTP deaminase (191 aa).

DCTP-binding positions include 112–117 (KSTYAR), 136–138 (TLE), Gln-157, Tyr-173, and Gln-183. Glu-138 serves as the catalytic Proton donor/acceptor.

This sequence belongs to the dCTP deaminase family. In terms of assembly, homotrimer.

The enzyme catalyses dCTP + H2O + H(+) = dUTP + NH4(+). It participates in pyrimidine metabolism; dUMP biosynthesis; dUMP from dCTP (dUTP route): step 1/2. In terms of biological role, catalyzes the deamination of dCTP to dUTP. The sequence is that of dCTP deaminase from Xylella fastidiosa (strain 9a5c).